We begin with the raw amino-acid sequence, 314 residues long: Replication initiation protein (314 aa).

A compositionally biased stretch (polar residues) spans 1–10; it reads MSKNNHANHS. Residues 1-25 form a disordered region; it reads MSKNNHANHSNHLENHDLDNFSKTG. The segment covering 11-20 has biased composition (basic and acidic residues); it reads NHLENHDLDN.

This sequence belongs to the plasmid replication initiation factor family.

Its function is as follows. This protein is probably a specific topoisomerase involved in initiating replication. This protein is specifically required and may be rate-limiting for replication of the plasmid in vivo. The protein is Replication initiation protein (repN) of Staphylococcus aureus.